A 574-amino-acid chain; its full sequence is Developmental and secondary metabolism regulator veA (574 aa).

Disordered regions lie at residues 1 to 22, 39 to 60, 255 to 500, and 513 to 540; these read MATR…SRIT, ERAR…VDPP, RSSD…GAGK, and RSYE…YPRR. A Velvet domain is found at 25–230; it reads GKKLTYKLNV…AEQGCRVRIR (206 aa). A Nuclear localization signal motif is present at residues 39-44; the sequence is ERARAC. Composition is skewed to pro residues over residues 314-323 and 330-341; these read RPLPPAPGPA and PAPPAPPAPPSH. Composition is skewed to polar residues over residues 343-353, 385-394, 406-415, and 448-458; these read PGYQSHLSFGS, HARNPSTSAE, RMSTERSSYP, and VAQSAAPRSQT. Positions 457–498 are PEST; sequence QTPSSSLVPSLPPLKALSGDYPNNLSQSSSSTSQSPSHDLGA. 2 stretches are compositionally biased toward low complexity: residues 459 to 474 and 482 to 493; these read PSSS…KALS and SQSSSSTSQSPS. A compositionally biased stretch (basic and acidic residues) spans 513–525; it reads RSYEDSFGHDDRP.

It belongs to the velvet family. VeA subfamily. As to quaternary structure, component of the heterotrimeric velvet complex composed of laeA, veA and velB; VeA acting as a bridging protein between laeA and velB.

It is found in the nucleus. Its subcellular location is the cytoplasm. Its function is as follows. Component of the velvet transcription factor complex that controls sexual/asexual developmental ratio in response to light, promoting sexual development in the darkness while stimulating asexual sporulation under illumination. The velvet complex hat acts as a global regulator for secondary metabolite gene expression. Controls the expression of the cyclopiazonic acid, aflatrem, and aflatoxin gene clusters. Controls the expression of the sclerotium-specific pigment asparasone A gene cluster. Controls the expression of the aflavarin gene cluster. also controls the production of hydrolases and other extracellular proteins during growth on natural starch-based substrates. Regulates genes involved in the High Osmolarity Glycerol (HOG) signaling pathway. Required for the conidial and sclerotial density-dependent production. The polypeptide is Developmental and secondary metabolism regulator veA (Aspergillus flavus (strain ATCC 200026 / FGSC A1120 / IAM 13836 / NRRL 3357 / JCM 12722 / SRRC 167)).